A 66-amino-acid chain; its full sequence is Small vasohibin-binding protein (66 aa).

The span at 1–23 (MDPPARKEKPKVKEPVSRIEKAK) shows a compositional bias: basic and acidic residues. The segment at 1 to 32 (MDPPARKEKPKVKEPVSRIEKAKQKSAQQELK) is disordered. Positions 5–52 (ARKEKPKVKEPVSRIEKAKQKSAQQELKQRQRAEIYALNRVMTELEQQ) form a coiled coil.

The protein belongs to the SVBP family. As to quaternary structure, interacts with VASH1 and VASH2.

The protein localises to the cytoplasm. It localises to the secreted. The protein resides in the cytoskeleton. Enhances the tyrosine carboxypeptidase activity of VASH1 and VASH2, thereby promoting the removal of the C-terminal tyrosine residue of alpha-tubulin. Also required to enhance the solubility and secretion of VASH1 and VASH2. Plays a role in axon and excitatory synapse formation. This chain is Small vasohibin-binding protein, found in Bos taurus (Bovine).